The following is a 472-amino-acid chain: F-box protein At3g03040 (472 aa).

The region spanning 1–49 (MDLLSSLPDEVRCLILSFLTTKESASTSVLSKKWRNLFALVPNLDFDDS) is the F-box domain.

The sequence is that of F-box protein At3g03040 from Arabidopsis thaliana (Mouse-ear cress).